Consider the following 378-residue polypeptide: 3-ketosteroid-9-alpha-monooxygenase, oxygenase component (378 aa).

The Rieske domain maps to 26-128; that stretch reads WHCIGLAKDF…TMERNGVLFV (103 aa). Cys-67, His-69, Cys-86, and His-89 together coordinate [2Fe-2S] cluster. Residues Asn-175, His-181, His-186, and Asp-305 each coordinate Fe cation.

As to quaternary structure, homotrimer. The two-component system 3-ketosteroid-9-alpha-monooxygenase is composed of an oxygenase component KshA and a reductase component KshB. [2Fe-2S] cluster serves as cofactor. It depends on Fe cation as a cofactor.

It catalyses the reaction androsta-1,4-diene-3,17-dione + 2 reduced [2Fe-2S]-[ferredoxin] + O2 + 2 H(+) = 9alpha-hydroxyandrosta-1,4-diene-3,17-dione + 2 oxidized [2Fe-2S]-[ferredoxin] + H2O. With respect to regulation, KSH activity is completely inhibited by zinc ions. KshA is specifically inhibited by Fe(3+), Co(2+), Zn(2+) and Ni(2+) ions. In terms of biological role, in vitro, catalyzes the introduction of a 9alpha-hydroxyl moiety into the ring B of 3-ketosteroid substrates such as 1,4-androstadiene-3,17-dione (ADD), 4-androstene-3,17-dione (AD), 4-androstene-17beta-ol-3-one (testosterone), 4-pregnene-3,20-dione (progesterone), 19-nor-4-androstene-3,17-dione (nordion), 1-(5alpha)-androstene-3,17-dione, 5alpha-androstane-3,17-dione and 5beta-androstane-3,17-dione. KSH has the highest activity with 3-keto-delta4 steroid substrates. This is 3-ketosteroid-9-alpha-monooxygenase, oxygenase component from Rhodococcus rhodochrous.